The sequence spans 699 residues: eEF1A lysine and N-terminal methyltransferase (699 aa).

At Met-1 the chain carries N-acetylmethionine. Position 267 is a phosphoserine (Ser-267). Residues 433–460 (VSHRAQKKRKKDRKKHRPADTPEDLPAA) are disordered. Positions 436 to 449 (RAQKKRKKDRKKHR) are enriched in basic residues.

Belongs to the methyltransferase superfamily. In terms of assembly, forms a tripartite complex containing GAB1, METTL13 and SPRY2. Within the complex interacts with GAB1 and SPRY2.

It localises to the cytoplasm. It is found in the nucleus. The protein resides in the mitochondrion. The catalysed reaction is L-lysyl-[protein] + S-adenosyl-L-methionine = N(6)-methyl-L-lysyl-[protein] + S-adenosyl-L-homocysteine + H(+). The enzyme catalyses N(6)-methyl-L-lysyl-[protein] + S-adenosyl-L-methionine = N(6),N(6)-dimethyl-L-lysyl-[protein] + S-adenosyl-L-homocysteine + H(+). It carries out the reaction N-terminal glycyl-L-lysyl-L-glutamyl-[protein] + 3 S-adenosyl-L-methionine = N-terminal N,N,N-trimethyl-glycyl-L-lysyl-L-glutamyl-[protein] + 3 S-adenosyl-L-homocysteine + 3 H(+). In terms of biological role, dual methyltransferase that catalyzes methylation of elongation factor 1-alpha (EEF1A1 and EEF1A2) at two different positions, and is therefore involved in the regulation of mRNA translation. Via its C-terminus, methylates EEF1A1 and EEF1A2 at the N-terminal residue 'Gly-2'. Via its N-terminus dimethylates EEF1A1 and EEF1A2 at residue 'Lys-55'. Has no activity towards core histones H2A, H2B, H3 and H4. In Bos taurus (Bovine), this protein is eEF1A lysine and N-terminal methyltransferase (METTL13).